The primary structure comprises 450 residues: Dol-P-Glc:Glc(2)Man(9)GlcNAc(2)-PP-Dol alpha-1,2-glucosyltransferase (450 aa).

Residues 12–32 form a helical membrane-spanning segment; sequence ISIISKYVAIVIFLIFVIIMF. N-linked (GlcNAc...) asparagine glycosylation occurs at N34. Helical transmembrane passes span 158 to 178, 190 to 210, 243 to 263, and 273 to 293; these read YFLF…LGLI, ALVG…IAFI, LLGY…NGGI, and IELH…FTIP. N-linked (GlcNAc...) asparagine glycosylation occurs at N297. A run of 4 helical transmembrane segments spans residues 312–332, 357–377, 384–404, and 429–449; these read IILN…FTIV, LKPL…SSLI, FIGI…SPLF, and FIWL…KGII.

This sequence belongs to the ALG10 glucosyltransferase family.

It localises to the endoplasmic reticulum membrane. The catalysed reaction is an alpha-D-Glc-(1-&gt;3)-alpha-D-Glc-(1-&gt;3)-alpha-D-Man-(1-&gt;2)-alpha-D-Man-(1-&gt;2)-alpha-D-Man-(1-&gt;3)-[alpha-D-Man-(1-&gt;2)-alpha-D-Man-(1-&gt;3)-[alpha-D-Man-(1-&gt;2)-alpha-D-Man-(1-&gt;6)]-alpha-D-Man-(1-&gt;6)]-beta-D-Man-(1-&gt;4)-beta-D-GlcNAc-(1-&gt;4)-alpha-D-GlcNAc-diphospho-di-trans,poly-cis-dolichol + a di-trans,poly-cis-dolichyl beta-D-glucosyl phosphate = a alpha-D-Glc-(1-&gt;2)-alpha-D-Glc-(1-&gt;3)-alpha-D-Glc-(1-&gt;3)-alpha-D-Man-(1-&gt;2)-alpha-D-Man-(1-&gt;2)-alpha-D-Man-(1-&gt;3)-[alpha-D-Man-(1-&gt;2)-alpha-D-Man-(1-&gt;3)-[alpha-D-Man-(1-&gt;2)-alpha-D-Man-(1-&gt;6)]-alpha-D-Man-(1-&gt;6)]-beta-D-Man-(1-&gt;4)-beta-D-GlcNAc-(1-&gt;4)-alpha-D-GlcNAc-diphospho-di-trans,poly-cis-dolichol + a di-trans,poly-cis-dolichyl phosphate + H(+). It participates in protein modification; protein glycosylation. Dol-P-Glc:Glc(2)Man(9)GlcNAc(2)-PP-Dol alpha-1,2-glucosyltransferase that operates in the biosynthetic pathway of dolichol-linked oligosaccharides, the glycan precursors employed in protein asparagine (N)-glycosylation. The assembly of dolichol-linked oligosaccharides begins on the cytosolic side of the endoplasmic reticulum membrane and finishes in its lumen. The sequential addition of sugars to dolichol pyrophosphate produces dolichol-linked oligosaccharides containing fourteen sugars, including two GlcNAcs, nine mannoses and three glucoses. Once assembled, the oligosaccharide is transferred from the lipid to nascent proteins by oligosaccharyltransferases. In the lumen of the endoplasmic reticulum, adds the third and last glucose residue from dolichyl phosphate glucose (Dol-P-Glc) onto the lipid-linked oligosaccharide intermediate Glc(2)Man(9)GlcNAc(2)-PP-Dol to produce Glc(3)Man(9)GlcNAc(2)-PP-Dol. In Candida albicans (strain SC5314 / ATCC MYA-2876) (Yeast), this protein is Dol-P-Glc:Glc(2)Man(9)GlcNAc(2)-PP-Dol alpha-1,2-glucosyltransferase (DIE2).